The sequence spans 146 residues: Interleukin-13 (146 aa).

An N-terminal signal peptide occupies residues 1-24 (MHPLLNPLLLALGLMALLLTTVIA). Asn52, Asn63, Asn71, and Asn86 each carry an N-linked (GlcNAc...) asparagine glycan. Disulfide bonds link Cys62/Cys90 and Cys78/Cys104.

Belongs to the IL-4/IL-13 family. As to quaternary structure, interacts with IL13RA2.

The protein localises to the secreted. Cytokine that plays important roles in allergic inflammation and immune response to parasite infection. Synergizes with IL2 in regulating interferon-gamma synthesis. Stimulates B-cell proliferation, and activation of eosinophils, basophils, and mast cells. Plays an important role in controlling IL33 activity by modulating the production of transmembrane and soluble forms of interleukin-1 receptor-like 1/IL1RL1. Displays the capacity to antagonize Th1-driven proinflammatory immune response and downregulates synthesis of many proinflammatory cytokines including IL1, IL6, IL10, IL12 and TNF-alpha through a mechanism that partially involves suppression of NF-kappa-B. Also functions on nonhematopoietic cells, including endothelial cells where it induces vascular cell adhesion protein 1/VCAM1, which is important in the recruitment of eosinophils. Exerts its biological effects through its receptors which comprises the IL4R chain and the IL13RA1 chain, to activate JAK1 and TYK2, leading to the activation of STAT6. Aside from IL13RA1, another receptor IL13RA2 acts as a high affinity decoy for IL13 and mediates internalization and depletion of extracellular IL13. The protein is Interleukin-13 (IL13) of Homo sapiens (Human).